The chain runs to 731 residues: 1,4-alpha-glucan branching enzyme GlgB (731 aa).

The active-site Nucleophile is the aspartate 409. The active-site Proton donor is glutamate 462.

The protein belongs to the glycosyl hydrolase 13 family. GlgB subfamily. As to quaternary structure, monomer.

The catalysed reaction is Transfers a segment of a (1-&gt;4)-alpha-D-glucan chain to a primary hydroxy group in a similar glucan chain.. It functions in the pathway glycan biosynthesis; glycogen biosynthesis. In terms of biological role, catalyzes the formation of the alpha-1,6-glucosidic linkages in glycogen by scission of a 1,4-alpha-linked oligosaccharide from growing alpha-1,4-glucan chains and the subsequent attachment of the oligosaccharide to the alpha-1,6 position. This Dickeya chrysanthemi (Pectobacterium chrysanthemi) protein is 1,4-alpha-glucan branching enzyme GlgB (glgB).